The chain runs to 235 residues: tRNA (guanine-N(1)-)-methyltransferase (235 aa).

S-adenosyl-L-methionine contacts are provided by residues Gly114 and 134-139; that span reads IGDYIL.

The protein belongs to the RNA methyltransferase TrmD family. In terms of assembly, homodimer.

The protein localises to the cytoplasm. It carries out the reaction guanosine(37) in tRNA + S-adenosyl-L-methionine = N(1)-methylguanosine(37) in tRNA + S-adenosyl-L-homocysteine + H(+). Functionally, specifically methylates guanosine-37 in various tRNAs. The chain is tRNA (guanine-N(1)-)-methyltransferase from Ehrlichia ruminantium (strain Gardel).